The sequence spans 154 residues: Small ribosomal subunit protein uS19 (154 aa).

This sequence belongs to the universal ribosomal protein uS19 family.

This chain is Small ribosomal subunit protein uS19 (RPS15), found in Oryza sativa subsp. japonica (Rice).